The sequence spans 237 residues: Thrombin-like enzyme agkihpin-1 (237 aa).

A propeptide is located at residue Met-1. The region spanning Ile-2 to Ala-228 is the Peptidase S1 domain. Cys-27 and Cys-43 are disulfide-bonded. The active-site Charge relay system is the His-42. Asn-80 carries N-linked (GlcNAc...) asparagine glycosylation. Asp-87 functions as the Charge relay system in the catalytic mechanism. Disulfide bonds link Cys-119/Cys-189, Cys-151/Cys-168, and Cys-179/Cys-204. Ser-183 (charge relay system) is an active-site residue.

Belongs to the peptidase S1 family. Snake venom subfamily. Expressed by the venom gland.

The protein resides in the secreted. With respect to regulation, the hydrolysis of TAMe (tosyl-arginine methyl ester) substrate is activated by Ca(2+), Fe(3+), Mg(2+) and Zn(2+), and inhibited by EDTA, PMSF and DTT. Thrombin-like enzyme that shows fibrinogenolytic activity against bovine fibrinogen alpha and beta chains, but not gamma chain. Hydrolyzes fibrin. Enhances ADP-induced human platelet aggregation. Has arginine esterase activity for TAMe (tosyl-arginine methyl ester) substrate. Reduces thrombin-induced thrombosis. Does not have hemorrhagic activity. Reduces the motility of human liver cancer HepG2 cells in a wound-healing assay. The polypeptide is Thrombin-like enzyme agkihpin-1 (Gloydius halys (Chinese water mocassin)).